A 184-amino-acid chain; its full sequence is UPF0340 protein TTE0860 (184 aa).

This sequence belongs to the UPF0340 family.

This is UPF0340 protein TTE0860 from Caldanaerobacter subterraneus subsp. tengcongensis (strain DSM 15242 / JCM 11007 / NBRC 100824 / MB4) (Thermoanaerobacter tengcongensis).